Consider the following 224-residue polypeptide: Redox-sensing transcriptional repressor Rex (224 aa).

Residues 17–56 constitute a DNA-binding region (H-T-H motif); sequence RYHRYLEELLKNDVKRISSRELSEKMGVTASQIRQDLNNF. 91 to 96 is an NAD(+) binding site; sequence GAGNLG.

It belongs to the transcriptional regulatory Rex family. Homodimer.

It is found in the cytoplasm. Modulates transcription in response to changes in cellular NADH/NAD(+) redox state. In Thermoanaerobacter pseudethanolicus (strain ATCC 33223 / 39E) (Clostridium thermohydrosulfuricum), this protein is Redox-sensing transcriptional repressor Rex.